The sequence spans 426 residues: Gamma-glutamylputrescine oxidoreductase (426 aa).

The protein belongs to the gamma-glutamylputrescine oxidoreductase family.

The enzyme catalyses gamma-L-glutamylputrescine + O2 + H2O = 4-(gamma-L-glutamylamino)butanal + H2O2 + NH4(+). The protein operates within amine and polyamine degradation; putrescine degradation; 4-aminobutanoate from putrescine: step 2/4. In terms of biological role, involved in the breakdown of putrescine via the oxidation of L-glutamylputrescine. This is Gamma-glutamylputrescine oxidoreductase (puuB) from Escherichia coli (strain K12).